The following is a 383-amino-acid chain: Succinyl-diaminopimelate desuccinylase (383 aa).

Zn(2+) is bound at residue histidine 73. Aspartate 75 is an active-site residue. Aspartate 107 lines the Zn(2+) pocket. The active-site Proton acceptor is glutamate 141. Residues glutamate 142, glutamate 170, and histidine 356 each contribute to the Zn(2+) site.

The protein belongs to the peptidase M20A family. DapE subfamily. Homodimer. It depends on Zn(2+) as a cofactor. Requires Co(2+) as cofactor.

The catalysed reaction is N-succinyl-(2S,6S)-2,6-diaminopimelate + H2O = (2S,6S)-2,6-diaminopimelate + succinate. Its pathway is amino-acid biosynthesis; L-lysine biosynthesis via DAP pathway; LL-2,6-diaminopimelate from (S)-tetrahydrodipicolinate (succinylase route): step 3/3. In terms of biological role, catalyzes the hydrolysis of N-succinyl-L,L-diaminopimelic acid (SDAP), forming succinate and LL-2,6-diaminopimelate (DAP), an intermediate involved in the bacterial biosynthesis of lysine and meso-diaminopimelic acid, an essential component of bacterial cell walls. The chain is Succinyl-diaminopimelate desuccinylase from Pseudomonas putida (strain W619).